A 569-amino-acid chain; its full sequence is 63 kDa chaperonin, mitochondrial (569 aa).

The N-terminal 29 residues, 1-29 (MFKMYRSPHITRNSFKYLKATNINSCRFY), are a transit peptide targeting the mitochondrion.

Belongs to the chaperonin (HSP60) family. As to quaternary structure, forms a single seven-member ring complex, in tight association with the p60 protein. As to expression, testis.

The protein resides in the mitochondrion. Implicated in mitochondrial protein import and macromolecular assembly. May facilitate the correct folding of imported proteins. May also prevent misfolding and promote the refolding and proper assembly of unfolded polypeptides generated under stress conditions in the mitochondrial matrix. The sequence is that of 63 kDa chaperonin, mitochondrial from Heliothis virescens (Tobacco budworm moth).